The sequence spans 522 residues: Cytochrome P450 26C1 (522 aa).

Residues 9–29 traverse the membrane as a helical segment; it reads LSVLGAAGTALLCAGLLLSLA. Residue Cys459 participates in heme binding.

The protein belongs to the cytochrome P450 family. Requires heme as cofactor. As to expression, detected in most tissues at very low level.

The protein resides in the membrane. The enzyme catalyses an organic molecule + reduced [NADPH--hemoprotein reductase] + O2 = an alcohol + oxidized [NADPH--hemoprotein reductase] + H2O + H(+). The catalysed reaction is all-trans-retinoate + reduced [NADPH--hemoprotein reductase] + O2 = all-trans-4-hydroxyretinoate + oxidized [NADPH--hemoprotein reductase] + H2O + H(+). It carries out the reaction all-trans-4-hydroxyretinoate + reduced [NADPH--hemoprotein reductase] + O2 = all-trans-4-oxoretinoate + oxidized [NADPH--hemoprotein reductase] + 2 H2O + H(+). It catalyses the reaction 9-cis-retinoate + reduced [NADPH--hemoprotein reductase] + O2 = 9-cis-4-hydroxyretinoate + oxidized [NADPH--hemoprotein reductase] + H2O + H(+). The enzyme catalyses 9-cis-4-hydroxyretinoate + reduced [NADPH--hemoprotein reductase] + O2 = 9-cis-4-oxoretinoate + oxidized [NADPH--hemoprotein reductase] + 2 H2O + H(+). The catalysed reaction is all-trans-4-hydroxy-13,14-dihydroretinoate + reduced [NADPH--hemoprotein reductase] + O2 = all-trans-4-oxo-13,14-dihydroretinoate + oxidized [NADPH--hemoprotein reductase] + 2 H2O + H(+). It carries out the reaction all-trans-13,14-dihydroretinoate + reduced [NADPH--hemoprotein reductase] + O2 = all-trans-4-hydroxy-13,14-dihydroretinoate + oxidized [NADPH--hemoprotein reductase] + H2O + H(+). Functionally, a cytochrome P450 monooxygenase involved in the metabolism of retinoates (RAs), the active metabolites of vitamin A, and critical signaling molecules in animals. RAs exist as at least four different isomers: all-trans-RA (atRA), 9-cis-RA, 13-cis-RA, and 9,13-dicis-RA, where atRA is considered to be the biologically active isomer, although 9-cis-RA and 13-cis-RA also have activity. Catalyzes the oxidation of atRA primarily at C-4. Oxidation of atRA limits its biological activity and initiates a degradative process leading to its eventual elimination, thereby contributes to the regulation of atRA homeostasis and signaling. Able to metabolize other RAs such as 9-cis with high efficiency. Can oxidize all-trans-13,14-dihydroretinoate (DRA) to metabolites which could include all-trans-4-oxo-DRA, all-trans-4-hydroxy-DRA, all-trans-5,8-epoxy-DRA, and all-trans-18-hydroxy-DRA. Shares sequence similarity with other CYP26 family members, but has higher affinity to 9-cis-RA and is much less sensitive to the inhibitory effects of ketoconazole. In cooperation with Cyp26a1, contributes to the CNS patterning and the development of regions of higher visual acuity. This is Cytochrome P450 26C1 (CYP26C1) from Homo sapiens (Human).